We begin with the raw amino-acid sequence, 645 residues long: Envelope glycoprotein (645 aa).

A signal peptide spans 1 to 36 (MEGPTHPKPFKDKTFSWDLIILVGVVRVLLRLDVGM). Topologically, residues 37 to 589 (ANPSPHQVYN…FNKSPWFTTL (553 aa)) are extracellular. 2 N-linked (GlcNAc...) asparagine; by host glycosylation sites follow: asparagine 46 and asparagine 61. Disulfide bonds link cysteine 128-cysteine 150 and cysteine 142-cysteine 155. The tract at residues 238-283 (QAMGPNLVLPEQKPPSRQSQTKSKVATQKPQTNGTTPRSVAPATMS) is disordered. Positions 252–275 (PSRQSQTKSKVATQKPQTNGTTPR) are enriched in polar residues. Residues asparagine 270, asparagine 305, and asparagine 310 are each glycosylated (N-linked (GlcNAc...) asparagine; by host). Intrachain disulfides connect cysteine 315-cysteine 318, cysteine 315-cysteine 542, and cysteine 534-cysteine 541. A CXXC motif is present at residues 315–318 (CWLC). 5 N-linked (GlcNAc...) asparagine; by host glycosylation sites follow: asparagine 334, asparagine 337, asparagine 377, asparagine 393, and asparagine 413. Positions 451–471 (ISLTVALMLGGLTVGGIAAGV) are fusion peptide. 2 coiled-coil regions span residues 479–528 (LETA…ILFL) and 538–574 (KEECCFYADHTGLVRDNMAKLRERLKQRQQLFDSQQG). An immunosuppression region spans residues 517–533 (LQNRRGLDILFLQGGGL). The CX6CC motif lies at 534-542 (CAALKEECC). Residues 590–610 (ISSIMGPLLILLLILLFGPCI) traverse the membrane as a helical segment. Cysteine 609 carries S-palmitoyl cysteine; by host lipidation. Over 611-645 (LNRLVQFVKDRISVVQALILTQQYQQIQQYDPDRP) the chain is Cytoplasmic.

The mature envelope protein (Env) consists of a trimer of SU-TM heterodimers attached by a labile interchain disulfide bond. Post-translationally, specific enzymatic cleavages in vivo yield mature proteins. Envelope glycoproteins are synthesized as an inactive precursor that is N-glycosylated and processed likely by host cell furin or by a furin-like protease in the Golgi to yield the mature SU and TM proteins. The cleavage site between SU and TM requires the minimal sequence [KR]-X-[KR]-R. The R-peptide is released from the C-terminus of the cytoplasmic tail of the TM protein upon particle formation as a result of proteolytic cleavage by the viral protease. Cleavage of this peptide is required for TM to become fusogenic. The CXXC motif is highly conserved across a broad range of retroviral envelope proteins. It is thought to participate in the formation of a labile disulfide bond possibly with the CX6CC motif present in the transmembrane protein. Isomerization of the intersubunit disulfide bond to an SU intrachain disulfide bond is thought to occur upon receptor recognition in order to allow membrane fusion. In terms of processing, the transmembrane protein is palmitoylated. Post-translationally, the R-peptide is palmitoylated.

It localises to the virion membrane. The protein localises to the host cell membrane. In terms of biological role, the surface protein (SU) attaches the virus to the host cell by binding to its receptor. This interaction triggers the refolding of the transmembrane protein (TM) and is thought to activate its fusogenic potential by unmasking its fusion peptide. Fusion occurs at the host cell plasma membrane. Functionally, the transmembrane protein (TM) acts as a class I viral fusion protein. Under the current model, the protein has at least 3 conformational states: pre-fusion native state, pre-hairpin intermediate state, and post-fusion hairpin state. During viral and target cell membrane fusion, the coiled coil regions (heptad repeats) assume a trimer-of-hairpins structure, positioning the fusion peptide in close proximity to the C-terminal region of the ectodomain. The formation of this structure appears to drive apposition and subsequent fusion of viral and target cell membranes. Membranes fusion leads to delivery of the nucleocapsid into the cytoplasm. This Feline sarcoma virus (strain SM) (Sm-FeSV) protein is Envelope glycoprotein (env).